The sequence spans 166 residues: 2-C-methyl-D-erythritol 2,4-cyclodiphosphate synthase (166 aa).

Positions 15 and 17 each coordinate a divalent metal cation. 4-CDP-2-C-methyl-D-erythritol 2-phosphate is bound by residues 15 to 17 (DIH) and 43 to 44 (HS). H51 serves as a coordination point for a divalent metal cation. Residues 65–67 (DIG), 141–144 (TTNE), and R151 each bind 4-CDP-2-C-methyl-D-erythritol 2-phosphate.

It belongs to the IspF family. As to quaternary structure, homotrimer. A divalent metal cation is required as a cofactor.

It carries out the reaction 4-CDP-2-C-methyl-D-erythritol 2-phosphate = 2-C-methyl-D-erythritol 2,4-cyclic diphosphate + CMP. It participates in isoprenoid biosynthesis; isopentenyl diphosphate biosynthesis via DXP pathway; isopentenyl diphosphate from 1-deoxy-D-xylulose 5-phosphate: step 4/6. Functionally, involved in the biosynthesis of isopentenyl diphosphate (IPP) and dimethylallyl diphosphate (DMAPP), two major building blocks of isoprenoid compounds. Catalyzes the conversion of 4-diphosphocytidyl-2-C-methyl-D-erythritol 2-phosphate (CDP-ME2P) to 2-C-methyl-D-erythritol 2,4-cyclodiphosphate (ME-CPP) with a corresponding release of cytidine 5-monophosphate (CMP). The sequence is that of 2-C-methyl-D-erythritol 2,4-cyclodiphosphate synthase from Prochlorococcus marinus (strain MIT 9215).